Here is a 508-residue protein sequence, read N- to C-terminus: Bifunctional purine biosynthesis protein PurH (508 aa).

An MGS-like domain is found at 1 to 144 (MTRALLSVSD…KNFASVLPIV (144 aa)).

This sequence belongs to the PurH family.

It carries out the reaction (6R)-10-formyltetrahydrofolate + 5-amino-1-(5-phospho-beta-D-ribosyl)imidazole-4-carboxamide = 5-formamido-1-(5-phospho-D-ribosyl)imidazole-4-carboxamide + (6S)-5,6,7,8-tetrahydrofolate. The enzyme catalyses IMP + H2O = 5-formamido-1-(5-phospho-D-ribosyl)imidazole-4-carboxamide. Its pathway is purine metabolism; IMP biosynthesis via de novo pathway; 5-formamido-1-(5-phospho-D-ribosyl)imidazole-4-carboxamide from 5-amino-1-(5-phospho-D-ribosyl)imidazole-4-carboxamide (10-formyl THF route): step 1/1. It participates in purine metabolism; IMP biosynthesis via de novo pathway; IMP from 5-formamido-1-(5-phospho-D-ribosyl)imidazole-4-carboxamide: step 1/1. This is Bifunctional purine biosynthesis protein PurH from Leuconostoc mesenteroides subsp. mesenteroides (strain ATCC 8293 / DSM 20343 / BCRC 11652 / CCM 1803 / JCM 6124 / NCDO 523 / NBRC 100496 / NCIMB 8023 / NCTC 12954 / NRRL B-1118 / 37Y).